The sequence spans 513 residues: Voltage-gated potassium channel regulatory subunit KCNG1 (513 aa).

At 1-224 (MTLLPGDNSD…DMVERPHSGL (224 aa)) the chain is on the cytoplasmic side. Positions 184–204 (EEDDALDSEGRDSEGPAEGEG) are disordered. Basic and acidic residues predominate over residues 191–204 (SEGRDSEGPAEGEG). A helical transmembrane segment spans residues 225-246 (PGKVFACLSVLFVTVTAVNLSV). Residues 247–267 (STLPSLREEEEQGHCSQMCHN) lie on the Extracellular side of the membrane. The helical transmembrane segment at 268–289 (VFIVESVCVGWFSLEFLLRLIQ) threads the bilayer. Over 290-300 (APSKFAFLRSP) the chain is Cytoplasmic. A helical transmembrane segment spans residues 301-321 (LTLIDLVAILPYYITLLVDGA). Topologically, residues 322–338 (AAGRRKPGAGNSYLDKV) are extracellular. A helical; Voltage-sensor membrane pass occupies residues 339-359 (GLVLRVLRALRILYVMRLARH). Residues 360-374 (SLGLQTLGLTARRCT) are Cytoplasmic-facing. A helical transmembrane segment spans residues 375–396 (REFGLLLLFLCVAIALFAPLLY). At 397 to 411 (VIENEMADSPEFTSI) the chain is on the extracellular side. Positions 412-423 (PACYWWAVITMT) form an intramembrane region, helical. The Selectivity filter motif lies at 424 to 429 (TVGYGD). The stretch at 424–431 (TVGYGDMV) is an intramembrane region. Topologically, residues 432–438 (PRSTPGQ) are extracellular. A helical transmembrane segment spans residues 439–467 (VVALSSILSGILLMAFPVTSIFHTFSRSY). Topologically, residues 468 to 513 (LELKQEQERVMFRRAQFLIKTKSQLSVSQDSDILFGSASSDTRDNN) are cytoplasmic.

It belongs to the potassium channel family. G (TC 1.A.1.2) subfamily. Kv6.1/KCNG1 sub-subfamily. Heterotetramer with KCNB1. Heterotetramer with KCNB2. In terms of tissue distribution, expressed in brain and placenta, and at much lower levels in kidney and pancreas.

Its subcellular location is the cell membrane. Functionally, regulatory alpha-subunit of the voltage-gated potassium (Kv) channel which, when coassembled with KCNB1 or KCNB2, can modulate their expression and their gating kinetics by acting on deactivation upon repolarization and inactivation during maintained depolarization. Potassium channel subunit that does not form functional channels by itself. This is Voltage-gated potassium channel regulatory subunit KCNG1 from Homo sapiens (Human).